Here is a 169-residue protein sequence, read N- to C-terminus: X polypeptide (169 aa).

It belongs to the IagB/IpgF/P19 family.

This chain is X polypeptide (yubQ), found in Escherichia coli (strain K12).